Consider the following 595-residue polypeptide: Tripeptidyl-peptidase SED3 (595 aa).

A signal peptide spans 1–22; it reads MLLPWQQTIIILFLGVNSLVAA. The propeptide at 23 to 201 is removed in mature form; that stretch reads LRNTYRTVEE…KLETIQLSSN (179 aa). N-linked (GlcNAc...) asparagine glycans are attached at residues Asn-207, Asn-264, and Asn-278. The Peptidase S53 domain occupies 209–595; sequence TITPQCLRDI…EILAKIVRDL (387 aa). Active-site charge relay system residues include Glu-285 and Asp-289. N-linked (GlcNAc...) asparagine glycosylation is found at Asn-298 and Asn-365. Ser-499 (charge relay system) is an active-site residue. Ca(2+) is bound by residues Asp-541 and Ile-542. N-linked (GlcNAc...) asparagine glycosylation is found at Asn-554, Asn-557, and Asn-569. 2 residues coordinate Ca(2+): Gly-573 and Asp-575.

Ca(2+) is required as a cofactor.

It localises to the secreted. The protein localises to the extracellular space. The enzyme catalyses Release of an N-terminal tripeptide from a polypeptide.. Secreted tripeptidyl-peptidase which degrades proteins at acidic pHs and is involved in virulence. This chain is Tripeptidyl-peptidase SED3 (SED3), found in Arthroderma otae (strain ATCC MYA-4605 / CBS 113480) (Microsporum canis).